A 278-amino-acid chain; its full sequence is Myb/SANT-like DNA-binding domain-containing protein 1 (278 aa).

Residues 44-131 (RNWTDAEMRG…WPYYLAIDRI (88 aa)) enclose the Myb-like domain. The interval 139–167 (CEGKLPDGQQPGPSTSQTEASLSPSAKST) is disordered. Positions 149–166 (PGPSTSQTEASLSPSAKS) are enriched in polar residues.

This Mus musculus (Mouse) protein is Myb/SANT-like DNA-binding domain-containing protein 1 (Msantd1).